The chain runs to 777 residues: Protein argonaute (777 aa).

The segment at M1–A107 is N-terminal domain. Residues L108–A182 are linker L1. The tract at residues S183 to G243 is PAZ domain. A linker L2 region spans residues S244–Y341. Residues A342 to G509 form a mid domain region. The Piwi domain occupies G445–S757. A PIWI domain region spans residues T510–L777. L777 provides a ligand contact to Mg(2+).

The protein belongs to the argonaute family. Long pAgo subfamily. The cofactor is Mg(2+).

Functionally, a catalytically inactive argonaute protein. Binds 5'-phosphorylated RNA as the guide (gRNA) and short DNA as target DNA (tDNA); does not bind other nucleic acid combinations, does not bind tDNA alone. Has highest affinity for gRNA that begins with 5'-phospho-U and poor affinity for gRNA with 5'-OH. Upon expression in E.coli, plasmid sequences are found in RsAgo, its induction leads to plasmid degradation and suppression of genes encoded on foreign plasmids, suggesting it may also interfere with transcription. Does not interact with preformed gRNA:tDNA duplexes. Mismatches and nt bulges are tolerated in the ternary complex, however, they significantly reduce the affinity of RsAgo:gRNA for tDNA. Mismatched tDNA can cause dissociation of gRNA from RsAgo. In situ binds 2 populations of RNA (15-19 and 45 nucleotides, nt) and a population of ssDNA 22-24 nt in length. The small sense RNA is probably derived from mRNA degradation and strongly enriched for U in the first and U/C in the second positions. The small DNA is enriched for sequences complementary to the RNA, with 3 nt overhangs on both ends; another nuclease may trim the ends. The sequences are largely derived from exogenous plasmids or genome-encoded foreign elements such as prophages and transposons. Forms a ternary complex with gRNA and double-stranded tDNA only when the tDNA is open. The chain is Protein argonaute from Cereibacter sphaeroides (strain ATCC 17025 / ATH 2.4.3) (Rhodobacter sphaeroides).